A 148-amino-acid chain; its full sequence is Ubiquitin-conjugating enzyme E2-16 kDa (148 aa).

Residues 2–148 enclose the UBC core domain; the sequence is SSSKRIAKEL…AKEWTKKYAV (147 aa). Serine 12 is modified (phosphoserine). Cysteine 86 functions as the Glycyl thioester intermediate in the catalytic mechanism. Lysine 91 is covalently cross-linked (Glycyl lysine isopeptide (Lys-Gly) (interchain with G-Cter in ubiquitin)).

Belongs to the ubiquitin-conjugating enzyme family. Component of the RSP5-UBA1-UBC5 ubiquitin ligase complex composed of E3 RSP5, E1 UBA1 and E2 UBC5. Post-translationally, the N-terminus is blocked.

The enzyme catalyses S-ubiquitinyl-[E1 ubiquitin-activating enzyme]-L-cysteine + [E2 ubiquitin-conjugating enzyme]-L-cysteine = [E1 ubiquitin-activating enzyme]-L-cysteine + S-ubiquitinyl-[E2 ubiquitin-conjugating enzyme]-L-cysteine.. It participates in protein modification; protein ubiquitination. Catalyzes the covalent attachment of ubiquitin to other proteins. Mediates the selective degradation of short-lived and abnormal proteins. The RSP5-UBA1-UBC5 ubiquitin ligase complex ubiquitinates RPO21 forming 'Lys-63'-linked polyubiquitin chains. The polypeptide is Ubiquitin-conjugating enzyme E2-16 kDa (UBC5) (Saccharomyces cerevisiae (strain ATCC 204508 / S288c) (Baker's yeast)).